A 334-amino-acid polypeptide reads, in one-letter code: Putative heat shock protein HSP 90-alpha A5 (334 aa).

The segment at lysine 55–glutamate 107 is disordered. The span at glutamine 59–glutamate 69 shows a compositional bias: basic and acidic residues. Positions glutamate 85–glutamate 94 are enriched in acidic residues. Serine 89 bears the Phosphoserine mark. Residues leucine 234 to lysine 267 are a coiled coil. The segment at glutamate 314 to glycine 334 is disordered. The segment covering glycine 320 to glycine 334 has biased composition (basic and acidic residues). Residues methionine 327–glycine 331 carry the TPR repeat-binding motif.

The protein belongs to the heat shock protein 90 family. Homodimer.

It is found in the cytoplasm. Its function is as follows. Putative molecular chaperone that may promote the maturation, structural maintenance and proper regulation of specific target proteins. In Homo sapiens (Human), this protein is Putative heat shock protein HSP 90-alpha A5 (HSP90AA5P).